Here is a 256-residue protein sequence, read N- to C-terminus: Triosephosphate isomerase (256 aa).

Residue 9–11 participates in substrate binding; the sequence is NWK. Catalysis depends on His97, which acts as the Electrophile. Catalysis depends on Glu169, which acts as the Proton acceptor. Residues Gly175, Ser214, and 235–236 each bind substrate; that span reads GG.

The protein belongs to the triosephosphate isomerase family. Homodimer.

Its subcellular location is the cytoplasm. The enzyme catalyses D-glyceraldehyde 3-phosphate = dihydroxyacetone phosphate. The protein operates within carbohydrate biosynthesis; gluconeogenesis. It participates in carbohydrate degradation; glycolysis; D-glyceraldehyde 3-phosphate from glycerone phosphate: step 1/1. Involved in the gluconeogenesis. Catalyzes stereospecifically the conversion of dihydroxyacetone phosphate (DHAP) to D-glyceraldehyde-3-phosphate (G3P). This is Triosephosphate isomerase from Aliivibrio fischeri (strain ATCC 700601 / ES114) (Vibrio fischeri).